The sequence spans 180 residues: Inorganic pyrophosphatase (180 aa).

Substrate contacts are provided by lysine 28, arginine 42, and tyrosine 54. Positions 66, 71, and 102 each coordinate Mg(2+). Substrate is bound at residue tyrosine 139.

Belongs to the PPase family. In terms of assembly, homohexamer. Requires Mg(2+) as cofactor.

It localises to the cytoplasm. It carries out the reaction diphosphate + H2O = 2 phosphate + H(+). Its function is as follows. Hydrolyzes PPi generated in anabolic reactions. In terms of biological role, catalyzes the hydrolysis of inorganic pyrophosphate (PPi) forming two phosphate ions. This Pseudanabaena sp. (strain PCC 6903) protein is Inorganic pyrophosphatase.